We begin with the raw amino-acid sequence, 127 residues long: MARIAGVDLPRDKRIEIGLTYIYGIGLSRSQEILAETDVNPDTRVKDLSDADVAAIRSEVQNNYEVEGDLRRLEAMSIKRLMDIGTYRGRRHRMGLPVRGQRTRTNARTRRGVRRTVAGKKKASAKK.

Residues 92-127 are disordered; that stretch reads HRMGLPVRGQRTRTNARTRRGVRRTVAGKKKASAKK. Over residues 101 to 127 the composition is skewed to basic residues; the sequence is QRTRTNARTRRGVRRTVAGKKKASAKK.

It belongs to the universal ribosomal protein uS13 family. As to quaternary structure, part of the 30S ribosomal subunit. Forms a loose heterodimer with protein S19. Forms two bridges to the 50S subunit in the 70S ribosome.

In terms of biological role, located at the top of the head of the 30S subunit, it contacts several helices of the 16S rRNA. In the 70S ribosome it contacts the 23S rRNA (bridge B1a) and protein L5 of the 50S subunit (bridge B1b), connecting the 2 subunits; these bridges are implicated in subunit movement. Contacts the tRNAs in the A and P-sites. The protein is Small ribosomal subunit protein uS13 of Trichodesmium erythraeum (strain IMS101).